We begin with the raw amino-acid sequence, 74 residues long: UPF0346 protein PEPE_1063 (74 aa).

This sequence belongs to the UPF0346 family.

This is UPF0346 protein PEPE_1063 from Pediococcus pentosaceus (strain ATCC 25745 / CCUG 21536 / LMG 10740 / 183-1w).